The chain runs to 87 residues: Small ribosomal subunit protein uS17 (87 aa).

Belongs to the universal ribosomal protein uS17 family. In terms of assembly, part of the 30S ribosomal subunit.

Its function is as follows. One of the primary rRNA binding proteins, it binds specifically to the 5'-end of 16S ribosomal RNA. In Neisseria gonorrhoeae (strain ATCC 700825 / FA 1090), this protein is Small ribosomal subunit protein uS17.